The chain runs to 191 residues: Akirin-1 (191 aa).

The interval 17–70 (LLSPGSPKRRRCAPLPGPTPGLRPPDAEPPPLQMQTPPASLQQPAPPGSERRLP) is disordered. Position 22 is a phosphoserine (S22). The Nuclear localization signal motif lies at 23 to 28 (PKRRRC). Residues 31–48 (LPGPTPGLRPPDAEPPPL) are compositionally biased toward pro residues. The segment covering 49 to 59 (QMQTPPASLQQ) has biased composition (polar residues). A Phosphothreonine modification is found at T71. Positions 188 to 191 (SYVS) match the SYVS motif motif.

This sequence belongs to the akirin family. Expressed in macrophages and satellite cells.

It localises to the nucleus. Its function is as follows. Molecular adapter that acts as a bridge between proteins, and which is involved skeletal muscle development. Functions as a signal transducer for MSTN during skeletal muscle regeneration and myogenesis. May regulate chemotaxis of both macrophages and myoblasts by reorganising actin cytoskeleton, leading to more efficient lamellipodia formation via a PI3 kinase dependent pathway. In contrast to AKIRIN2, not involved in nuclear import of proteasomes. This chain is Akirin-1, found in Mus musculus (Mouse).